Here is a 319-residue protein sequence, read N- to C-terminus: Acetyl-coenzyme A carboxylase carboxyl transferase subunit alpha (319 aa).

A CoA carboxyltransferase C-terminal domain is found at 35–296; it reads DLDKEIEQLE…KATLVANLAE (262 aa).

Belongs to the AccA family. As to quaternary structure, acetyl-CoA carboxylase is a heterohexamer composed of biotin carboxyl carrier protein (AccB), biotin carboxylase (AccC) and two subunits each of ACCase subunit alpha (AccA) and ACCase subunit beta (AccD).

It is found in the cytoplasm. It carries out the reaction N(6)-carboxybiotinyl-L-lysyl-[protein] + acetyl-CoA = N(6)-biotinyl-L-lysyl-[protein] + malonyl-CoA. It functions in the pathway lipid metabolism; malonyl-CoA biosynthesis; malonyl-CoA from acetyl-CoA: step 1/1. Functionally, component of the acetyl coenzyme A carboxylase (ACC) complex. First, biotin carboxylase catalyzes the carboxylation of biotin on its carrier protein (BCCP) and then the CO(2) group is transferred by the carboxyltransferase to acetyl-CoA to form malonyl-CoA. This chain is Acetyl-coenzyme A carboxylase carboxyl transferase subunit alpha, found in Photobacterium profundum (strain SS9).